The chain runs to 114 residues: MPKAAGDAKLLIQSLNKAYAATPTNLKIIDLYVVFAVATALVQVVYMGIVGSFPFNSFLSGVLSSIGTAVLGVCLRIQVNKDNKEFKDLPPERAFADFVLCNLVLHLVIMNFLG.

Over 1–30 the chain is Cytoplasmic; the sequence is MPKAAGDAKLLIQSLNKAYAATPTNLKIID. Residues 31 to 51 form a helical membrane-spanning segment; it reads LYVVFAVATALVQVVYMGIVG. The Lumenal segment spans residues 52-54; the sequence is SFP. A helical transmembrane segment spans residues 55 to 75; the sequence is FNSFLSGVLSSIGTAVLGVCL. Topologically, residues 76–93 are cytoplasmic; it reads RIQVNKDNKEFKDLPPER. The chain crosses the membrane as a helical span at residues 94–114; sequence AFADFVLCNLVLHLVIMNFLG.

The protein belongs to the DAD/OST2 family. Component of the oligosaccharyltransferase (OST) complex.

It is found in the endoplasmic reticulum membrane. Its pathway is protein modification; protein glycosylation. Its function is as follows. Subunit of the oligosaccharyl transferase (OST) complex that catalyzes the initial transfer of a defined glycan (Glc(3)Man(9)GlcNAc(2) in eukaryotes) from the lipid carrier dolichol-pyrophosphate to an asparagine residue within an Asn-X-Ser/Thr consensus motif in nascent polypeptide chains, the first step in protein N-glycosylation. N-glycosylation occurs cotranslationally and the complex associates with the Sec61 complex at the channel-forming translocon complex that mediates protein translocation across the endoplasmic reticulum (ER). All subunits are required for a maximal enzyme activity. In Hordeum vulgare (Barley), this protein is Dolichyl-diphosphooligosaccharide--protein glycosyltransferase subunit DAD2 (DAD2).